We begin with the raw amino-acid sequence, 207 residues long: Guanylate kinase (207 aa).

The 180-residue stretch at 6-185 (GLLIVLSGPS…AKNRIQCIVE (180 aa)) folds into the Guanylate kinase-like domain. Residue 13–20 (GPSGVGKG) coordinates ATP.

It belongs to the guanylate kinase family.

It localises to the cytoplasm. The enzyme catalyses GMP + ATP = GDP + ADP. Its function is as follows. Essential for recycling GMP and indirectly, cGMP. The sequence is that of Guanylate kinase from Staphylococcus aureus (strain bovine RF122 / ET3-1).